The primary structure comprises 328 residues: Ribosomal RNA large subunit methyltransferase F (328 aa).

The interval 1–31 (MTDTRKPPRKKPQRPAKPAAPREKATLHPRN) is disordered.

This sequence belongs to the methyltransferase superfamily. METTL16/RlmF family.

Its subcellular location is the cytoplasm. The catalysed reaction is adenosine(1618) in 23S rRNA + S-adenosyl-L-methionine = N(6)-methyladenosine(1618) in 23S rRNA + S-adenosyl-L-homocysteine + H(+). Functionally, specifically methylates the adenine in position 1618 of 23S rRNA. In Pseudomonas syringae pv. syringae (strain B728a), this protein is Ribosomal RNA large subunit methyltransferase F.